The chain runs to 603 residues: Isocitrate dehydrogenase kinase/phosphatase (603 aa).

Residues Ala-327–Leu-333 and Lys-348 contribute to the ATP site. Asp-383 is an active-site residue.

It belongs to the AceK family.

The protein resides in the cytoplasm. The catalysed reaction is L-seryl-[isocitrate dehydrogenase] + ATP = O-phospho-L-seryl-[isocitrate dehydrogenase] + ADP + H(+). In terms of biological role, bifunctional enzyme which can phosphorylate or dephosphorylate isocitrate dehydrogenase (IDH) on a specific serine residue. This is a regulatory mechanism which enables bacteria to bypass the Krebs cycle via the glyoxylate shunt in response to the source of carbon. When bacteria are grown on glucose, IDH is fully active and unphosphorylated, but when grown on acetate or ethanol, the activity of IDH declines drastically concomitant with its phosphorylation. In Burkholderia mallei (strain ATCC 23344), this protein is Isocitrate dehydrogenase kinase/phosphatase.